We begin with the raw amino-acid sequence, 324 residues long: Probable 6-phosphogluconolactonase 4, chloroplastic (324 aa).

Residues 1–61 constitute a chloroplast transit peptide; sequence MSVSAAVAAA…RAPAMATDCA (61 aa). Residues 20-43 are disordered; it reads RRRSPPASRVAATSRGRPFSSGPH. Low complexity predominate over residues 24 to 34; the sequence is PPASRVAATSR.

Belongs to the glucosamine/galactosamine-6-phosphate isomerase family. 6-phosphogluconolactonase subfamily.

It is found in the plastid. Its subcellular location is the chloroplast. It carries out the reaction 6-phospho-D-glucono-1,5-lactone + H2O = 6-phospho-D-gluconate + H(+). It participates in carbohydrate degradation; pentose phosphate pathway; D-ribulose 5-phosphate from D-glucose 6-phosphate (oxidative stage): step 2/3. Hydrolysis of 6-phosphogluconolactone to 6-phosphogluconate. This Oryza sativa subsp. indica (Rice) protein is Probable 6-phosphogluconolactonase 4, chloroplastic.